Consider the following 533-residue polypeptide: Probable nucleolar protein 5-1 (533 aa).

Positions 280–398 (IAPNLTALVG…LEARLRTLEG (119 aa)) constitute a Nop domain. Positions 402 to 533 (GRLSGSAKGK…EKKKKKKTEV (132 aa)) are disordered. Positions 412 to 423 (PKIEVYDKDKKK) are enriched in basic and acidic residues. Over residues 433 to 450 (KTYNTAADSLLQTPTVDS) the composition is skewed to polar residues. Basic and acidic residues-rich tracts occupy residues 474–489 (TEEP…KTEA) and 515–524 (MPAKKKEKSE).

The protein belongs to the NOP5/NOP56 family.

The protein resides in the nucleus. Its subcellular location is the nucleolus. Its function is as follows. Required for 60S ribosomal subunit biogenesis. The protein is Probable nucleolar protein 5-1 (NOP5-1) of Arabidopsis thaliana (Mouse-ear cress).